Here is a 200-residue protein sequence, read N- to C-terminus: Recombination protein RecR (200 aa).

The C4-type zinc finger occupies 60 to 75 (CVYCQALTEDDVCNIC). A Toprim domain is found at 83–177 (TKLCIIESML…KISRIGFGVP (95 aa)).

This sequence belongs to the RecR family.

In terms of biological role, may play a role in DNA repair. It seems to be involved in an RecBC-independent recombinational process of DNA repair. It may act with RecF and RecO. The sequence is that of Recombination protein RecR from Francisella tularensis subsp. tularensis (strain WY96-3418).